A 1330-amino-acid chain; its full sequence is ESX-3 secretion system protein EccC3 (1330 aa).

A run of 2 helical transmembrane segments spans residues 43-63 and 65-85; these read LPYLIGILIVGMIVALVATGM and VISPQTLFFPFVLLLAATALY. FtsK domains follow at residues 456 to 662, 811 to 1000, and 1090 to 1280; these read GEPL…SVSR, RDPL…RDSN, and LAPV…ADSG. Residues 479–486, 829–836, and 1107–1114 each bind ATP; these read GMTGSGKS, GGPKSGKS, and GDARSGKT.

As to quaternary structure, part of the ESX-3 / type VII secretion system (T7SS), which is composed of cytosolic and membrane components. The ESX-3 membrane complex is composed of EccB3, EccC3, EccD3 and EccE3.

It localises to the cell inner membrane. Its function is as follows. Part of the ESX-3 specialized secretion system, which is important for iron and zinc uptake or homeostasis. The protein is ESX-3 secretion system protein EccC3 of Mycobacterium tuberculosis (strain ATCC 25618 / H37Rv).